The primary structure comprises 488 residues: Cobyric acid synthase (488 aa).

Positions 254–442 (KFKIVVPVLP…VHGLFGMDTQ (189 aa)) constitute a GATase cobBQ-type domain. The active-site Nucleophile is C336. The active site involves H434.

This sequence belongs to the CobB/CobQ family. CobQ subfamily.

The protein operates within cofactor biosynthesis; adenosylcobalamin biosynthesis. Its function is as follows. Catalyzes amidations at positions B, D, E, and G on adenosylcobyrinic A,C-diamide. NH(2) groups are provided by glutamine, and one molecule of ATP is hydrogenolyzed for each amidation. This is Cobyric acid synthase from Beijerinckia indica subsp. indica (strain ATCC 9039 / DSM 1715 / NCIMB 8712).